The chain runs to 149 residues: Transcriptional repressor NrdR (149 aa).

A zinc finger lies at 3–34; sequence CPFCTAVDTKVIDSRLVGDGSQVRRRRQCLVC. An ATP-cone domain is found at 49-139; the sequence is PRVVKSDEIR…VYRSFEDVRD (91 aa).

Belongs to the NrdR family. It depends on Zn(2+) as a cofactor.

Functionally, negatively regulates transcription of bacterial ribonucleotide reductase nrd genes and operons by binding to NrdR-boxes. This chain is Transcriptional repressor NrdR, found in Proteus mirabilis (strain HI4320).